Here is a 334-residue protein sequence, read N- to C-terminus: Endoplasmic reticulum junction formation protein lunapark (334 aa).

Topologically, residues 1–40 are cytoplasmic; sequence MGWFFQKKKEFDFGGELDRLEMKLEEAQYNIDNIQSQKKK. The stretch at 12 to 42 forms a coiled coil; the sequence is DFGGELDRLEMKLEEAQYNIDNIQSQKKKIL. Residues 41–61 form a helical membrane-spanning segment; that stretch reads ILFRYTVCSLAIYTIGMAVWA. Residues 62–78 lie on the Lumenal side of the membrane; sequence SRSSILFQHPLFSKLFR. A helical membrane pass occupies residues 79-99; it reads ISLYILGVFSLYMFRWAIAWF. A coiled-coil region spans residues 99 to 127; it reads FCEKRLSRARMNLHKLNAEKRKILDALKS. The Cytoplasmic portion of the chain corresponds to 100–334; sequence CEKRLSRARM…SVPESLTPTK (235 aa). A C4-type; plays a role in ER morphology zinc finger spans residues 201 to 227; the sequence is CSHCFHHNGLASYGEKASDVRYVCLFC. Positions 237–315 are disordered; it reads KSLPSSEMDS…SSPDASYNSV (79 aa). Positions 239 to 252 are enriched in polar residues; that stretch reads LPSSEMDSNLQTNP. The segment covering 253-270 has biased composition (low complexity); sequence SSISKGKKNNSNNTTQKG. The segment covering 273 to 283 has biased composition (polar residues); the sequence is IISSPQVINAS. Phosphoserine is present on Ser-284. The span at 297 to 315 shows a compositional bias: low complexity; that stretch reads ALPTSPLSSSSPDASYNSV.

It belongs to the lunapark family.

It localises to the endoplasmic reticulum membrane. The protein localises to the golgi apparatus membrane. Functionally, plays a role in tubular endoplasmic reticulum network formation and maintenance. This chain is Endoplasmic reticulum junction formation protein lunapark (lnp1), found in Schizosaccharomyces pombe (strain 972 / ATCC 24843) (Fission yeast).